The following is a 208-amino-acid chain: Small ribosomal subunit protein uS4 (208 aa).

Residues 95–161 (MRLDALVLRA…VPLQVAAAGA (67 aa)) form the S4 RNA-binding domain.

The protein belongs to the universal ribosomal protein uS4 family. Part of the 30S ribosomal subunit. Contacts protein S5. The interaction surface between S4 and S5 is involved in control of translational fidelity.

Its function is as follows. One of the primary rRNA binding proteins, it binds directly to 16S rRNA where it nucleates assembly of the body of the 30S subunit. Functionally, with S5 and S12 plays an important role in translational accuracy. The protein is Small ribosomal subunit protein uS4 of Pseudarthrobacter chlorophenolicus (strain ATCC 700700 / DSM 12829 / CIP 107037 / JCM 12360 / KCTC 9906 / NCIMB 13794 / A6) (Arthrobacter chlorophenolicus).